Reading from the N-terminus, the 339-residue chain is Small ribosomal subunit protein uS3m (339 aa).

The protein belongs to the universal ribosomal protein uS3 family.

The protein resides in the mitochondrion. Functionally, essential for mitochondrial protein synthesis and required for the maturation of small ribosomal subunits. This is Small ribosomal subunit protein uS3m (VAR1) from Candida glabrata (strain ATCC 2001 / BCRC 20586 / JCM 3761 / NBRC 0622 / NRRL Y-65 / CBS 138) (Yeast).